The sequence spans 734 residues: Photosystem I P700 chlorophyll a apoprotein A2 (734 aa).

Helical transmembrane passes span 46–69, 135–158, 175–199, 273–291, 330–353, 369–395, 417–439, and 517–535; these read IFAS…FHVA, LYTG…LHLQ, LNHH…HVAI, IAHH…GHMY, LHFQ…QHMY, AALY…IFFV, AIIS…LYVH, and FLVH…LILV. [4Fe-4S] cluster is bound by residues C559 and C568. Transmembrane regions (helical) follow at residues 575–596 and 643–665; these read AFYL…YWHW and LSVW…MFLI. The chlorophyll a site is built by H654, M662, and Y670. W671 lines the phylloquinone pocket. Residues 707-727 traverse the membrane as a helical segment; that stretch reads LVGLAHFSVGYVLTYAAFLIA.

Belongs to the PsaA/PsaB family. In terms of assembly, the PsaA/B heterodimer binds the P700 chlorophyll special pair and subsequent electron acceptors. PSI consists of a core antenna complex that captures photons, and an electron transfer chain that converts photonic excitation into a charge separation. The eukaryotic PSI reaction center is composed of at least 11 subunits. P700 is a chlorophyll a/chlorophyll a' dimer, A0 is one or more chlorophyll a, A1 is one or both phylloquinones and FX is a shared 4Fe-4S iron-sulfur center. is required as a cofactor.

Its subcellular location is the plastid. The protein resides in the chloroplast thylakoid membrane. It catalyses the reaction reduced [plastocyanin] + hnu + oxidized [2Fe-2S]-[ferredoxin] = oxidized [plastocyanin] + reduced [2Fe-2S]-[ferredoxin]. PsaA and PsaB bind P700, the primary electron donor of photosystem I (PSI), as well as the electron acceptors A0, A1 and FX. PSI is a plastocyanin-ferredoxin oxidoreductase, converting photonic excitation into a charge separation, which transfers an electron from the donor P700 chlorophyll pair to the spectroscopically characterized acceptors A0, A1, FX, FA and FB in turn. Oxidized P700 is reduced on the lumenal side of the thylakoid membrane by plastocyanin. This is Photosystem I P700 chlorophyll a apoprotein A2 from Chlorokybus atmophyticus (Soil alga).